We begin with the raw amino-acid sequence, 219 residues long: Ribonuclease HII (219 aa).

The 190-residue stretch at 30-219 folds into the RNase H type-2 domain; sequence RVIAGIDEAG…VREHVTCPSS (190 aa). The a divalent metal cation site is built by Asp36, Glu37, and Asp128.

It belongs to the RNase HII family. It depends on Mn(2+) as a cofactor. Mg(2+) is required as a cofactor.

The protein localises to the cytoplasm. The catalysed reaction is Endonucleolytic cleavage to 5'-phosphomonoester.. Functionally, endonuclease that specifically degrades the RNA of RNA-DNA hybrids. This chain is Ribonuclease HII, found in Pelobacter propionicus (strain DSM 2379 / NBRC 103807 / OttBd1).